The primary structure comprises 55 residues: DNA-binding protein (55 aa).

The disordered stretch occupies residues Met1 to Tyr55. A run of 2 repeats spans residues Arg5 to Ser10 and Arg19 to Ser24. Residues Arg5–Ser24 form a 2 X 6 AA repeats of R-R-R-R-S-S region. Basic residues predominate over residues Thr18–Ser41.

Interacts with protein AC132. In terms of processing, phosphorylated.

It is found in the virion. It localises to the host cytoplasm. Its function is as follows. Plays a role in viral DNA packaging and nucleocapsid assembly. Promotes viral gene transcription during the late stage of infection while it is non-essential for the basal level of viral gene transcription. The protein is DNA-binding protein (P6.9) of Lepidoptera (butterflies and moths).